A 376-amino-acid polypeptide reads, in one-letter code: Glucose-1-phosphate adenylyltransferase (376 aa).

Alpha-D-glucose 1-phosphate is bound by residues Y101, G166, 181–182 (EK), and S192.

This sequence belongs to the bacterial/plant glucose-1-phosphate adenylyltransferase family. In terms of assembly, homotetramer.

It catalyses the reaction alpha-D-glucose 1-phosphate + ATP + H(+) = ADP-alpha-D-glucose + diphosphate. It participates in glycan biosynthesis; glycogen biosynthesis. Functionally, involved in the biosynthesis of ADP-glucose, a building block required for the elongation reactions to produce glycogen. Catalyzes the reaction between ATP and alpha-D-glucose 1-phosphate (G1P) to produce pyrophosphate and ADP-Glc. This chain is Glucose-1-phosphate adenylyltransferase, found in Bacillus cereus (strain ZK / E33L).